We begin with the raw amino-acid sequence, 92 residues long: Small ribosomal subunit protein uS19 (92 aa).

It belongs to the universal ribosomal protein uS19 family.

Functionally, protein S19 forms a complex with S13 that binds strongly to the 16S ribosomal RNA. The sequence is that of Small ribosomal subunit protein uS19 from Agrobacterium fabrum (strain C58 / ATCC 33970) (Agrobacterium tumefaciens (strain C58)).